The primary structure comprises 194 residues: MAIIIGIDPGSRMTGYGILQQTGDKLTYIDSGTIRTDTKEMPERLKRIFNGLTRITQHHLKYADEPIYTAIEQVFMAENPDSALKLGQARGAAIAAMVALDLEVSEYTARQIKQAVCGYGAAAKEQVQEMVCRILTLDFVPQQDAADGLACAICHAHSSHSMNKLILNSAMRGRGASKKKGRWRLTEEDLGNLR.

Active-site residues include Asp-8, Glu-72, and Asp-144. Asp-8, Glu-72, and Asp-144 together coordinate Mg(2+).

Belongs to the RuvC family. Homodimer which binds Holliday junction (HJ) DNA. The HJ becomes 2-fold symmetrical on binding to RuvC with unstacked arms; it has a different conformation from HJ DNA in complex with RuvA. In the full resolvosome a probable DNA-RuvA(4)-RuvB(12)-RuvC(2) complex forms which resolves the HJ. The cofactor is Mg(2+).

It localises to the cytoplasm. It carries out the reaction Endonucleolytic cleavage at a junction such as a reciprocal single-stranded crossover between two homologous DNA duplexes (Holliday junction).. In terms of biological role, the RuvA-RuvB-RuvC complex processes Holliday junction (HJ) DNA during genetic recombination and DNA repair. Endonuclease that resolves HJ intermediates. Cleaves cruciform DNA by making single-stranded nicks across the HJ at symmetrical positions within the homologous arms, yielding a 5'-phosphate and a 3'-hydroxyl group; requires a central core of homology in the junction. The consensus cleavage sequence is 5'-(A/T)TT(C/G)-3'. Cleavage occurs on the 3'-side of the TT dinucleotide at the point of strand exchange. HJ branch migration catalyzed by RuvA-RuvB allows RuvC to scan DNA until it finds its consensus sequence, where it cleaves and resolves the cruciform DNA. The sequence is that of Crossover junction endodeoxyribonuclease RuvC from Psychrobacter cryohalolentis (strain ATCC BAA-1226 / DSM 17306 / VKM B-2378 / K5).